The following is a 156-amino-acid chain: ATP synthase subunit b (156 aa).

A helical transmembrane segment spans residues 5 to 25 (LTLIGQAIAFAVFVWFCMKFV).

It belongs to the ATPase B chain family. In terms of assembly, F-type ATPases have 2 components, F(1) - the catalytic core - and F(0) - the membrane proton channel. F(1) has five subunits: alpha(3), beta(3), gamma(1), delta(1), epsilon(1). F(0) has three main subunits: a(1), b(2) and c(10-14). The alpha and beta chains form an alternating ring which encloses part of the gamma chain. F(1) is attached to F(0) by a central stalk formed by the gamma and epsilon chains, while a peripheral stalk is formed by the delta and b chains.

Its subcellular location is the cell inner membrane. In terms of biological role, f(1)F(0) ATP synthase produces ATP from ADP in the presence of a proton or sodium gradient. F-type ATPases consist of two structural domains, F(1) containing the extramembraneous catalytic core and F(0) containing the membrane proton channel, linked together by a central stalk and a peripheral stalk. During catalysis, ATP synthesis in the catalytic domain of F(1) is coupled via a rotary mechanism of the central stalk subunits to proton translocation. Component of the F(0) channel, it forms part of the peripheral stalk, linking F(1) to F(0). In Chromohalobacter salexigens (strain ATCC BAA-138 / DSM 3043 / CIP 106854 / NCIMB 13768 / 1H11), this protein is ATP synthase subunit b.